The sequence spans 316 residues: Ribosomal protein L11 methyltransferase (316 aa).

Positions 157, 178, 200, and 243 each coordinate S-adenosyl-L-methionine.

It belongs to the methyltransferase superfamily. PrmA family.

Its subcellular location is the cytoplasm. The catalysed reaction is L-lysyl-[protein] + 3 S-adenosyl-L-methionine = N(6),N(6),N(6)-trimethyl-L-lysyl-[protein] + 3 S-adenosyl-L-homocysteine + 3 H(+). In terms of biological role, methylates ribosomal protein L11. This chain is Ribosomal protein L11 methyltransferase, found in Streptococcus pneumoniae (strain JJA).